The following is an 89-amino-acid chain: Small ribosomal subunit protein uS15 (89 aa).

It belongs to the universal ribosomal protein uS15 family. As to quaternary structure, part of the 30S ribosomal subunit. Forms a bridge to the 50S subunit in the 70S ribosome, contacting the 23S rRNA.

In terms of biological role, one of the primary rRNA binding proteins, it binds directly to 16S rRNA where it helps nucleate assembly of the platform of the 30S subunit by binding and bridging several RNA helices of the 16S rRNA. Its function is as follows. Forms an intersubunit bridge (bridge B4) with the 23S rRNA of the 50S subunit in the ribosome. In Maridesulfovibrio salexigens (strain ATCC 14822 / DSM 2638 / NCIMB 8403 / VKM B-1763) (Desulfovibrio salexigens), this protein is Small ribosomal subunit protein uS15.